The following is a 386-amino-acid chain: Na(+)/H(+) antiporter NhaA (386 aa).

Helical transmembrane passes span 10 to 30 (EFSI…NVAP), 45 to 65 (LSFH…IAAV), 84 to 104 (LNPL…YLAL), 116 to 136 (GWGI…RLIF), 142 to 162 (VIAF…VIIA), 169 to 189 (VLPV…IAFI), 261 to 281 (IIVD…GFSA), 287 to 307 (WLVF…FALL), 323 to 343 (HLLV…FVAG), and 358 to 378 (GAIL…LLGI).

Belongs to the NhaA Na(+)/H(+) (TC 2.A.33) antiporter family.

The protein resides in the cell inner membrane. The catalysed reaction is Na(+)(in) + 2 H(+)(out) = Na(+)(out) + 2 H(+)(in). Functionally, na(+)/H(+) antiporter that extrudes sodium in exchange for external protons. This chain is Na(+)/H(+) antiporter NhaA, found in Geotalea uraniireducens (strain Rf4) (Geobacter uraniireducens).